The following is a 71-amino-acid chain: Beta-defensin 131A (71 aa).

Positions 1-22 are cleaved as a signal peptide; the sequence is MRVLFFVFGVLSLMFTVPPARS. Disulfide bonds link cysteine 29-cysteine 57, cysteine 37-cysteine 51, and cysteine 41-cysteine 58.

The protein belongs to the beta-defensin family.

The protein resides in the secreted. Its function is as follows. Has antibacterial activity. Upon stimulation with lipoteichoic acid, promotes cytokines and chemokines production and secretion. The sequence is that of Beta-defensin 131A from Pan troglodytes (Chimpanzee).